Reading from the N-terminus, the 210-residue chain is High frequency lysogenization protein HflD homolog (210 aa).

Residues 103 to 130 (EAKAKLAERLQQIERQLPLYENDIMADQ) adopt a coiled-coil conformation.

The protein belongs to the HflD family.

Its subcellular location is the cytoplasm. It is found in the cell inner membrane. The polypeptide is High frequency lysogenization protein HflD homolog (Actinobacillus pleuropneumoniae serotype 3 (strain JL03)).